A 99-amino-acid chain; its full sequence is MLKPSIDSLLKEVPSKYSLVILASKRAHELDEGVQPTVESFDSVKSVGRALEEIEAGTVISDPNPEEKRERLRIEREERKRQREQEQKELENRLRDEKN.

Residues 55-99 (EAGTVISDPNPEEKRERLRIEREERKRQREQEQKELENRLRDEKN) form a disordered region. Residues 65–99 (PEEKRERLRIEREERKRQREQEQKELENRLRDEKN) show a composition bias toward basic and acidic residues.

Belongs to the RNA polymerase subunit omega family. In terms of assembly, the RNAP catalytic core consists of 2 alpha, 1 beta, 1 beta' and 1 omega subunit. When a sigma factor is associated with the core the holoenzyme is formed, which can initiate transcription.

The catalysed reaction is RNA(n) + a ribonucleoside 5'-triphosphate = RNA(n+1) + diphosphate. Functionally, promotes RNA polymerase assembly. Latches the N- and C-terminal regions of the beta' subunit thereby facilitating its interaction with the beta and alpha subunits. This Enterococcus faecalis (strain ATCC 700802 / V583) protein is DNA-directed RNA polymerase subunit omega.